The sequence spans 564 residues: Septation ring formation regulator EzrA (564 aa).

Residues 1 to 2 lie on the Extracellular side of the membrane; that stretch reads MV. A helical transmembrane segment spans residues 3 to 21; that stretch reads FVISVILAIIVILTIGLIL. The Cytoplasmic portion of the chain corresponds to 22-564; sequence RKRIYDKVDH…IEENQLTLNR (543 aa). Coiled coils occupy residues 101 to 140, 168 to 215, 251 to 436, and 468 to 537; these read ANNI…REEV, FDKK…MEQF, GFDK…KKSN, and DIAK…ELSL.

It belongs to the EzrA family.

It localises to the cell membrane. Negative regulator of FtsZ ring formation; modulates the frequency and position of FtsZ ring formation. Inhibits FtsZ ring formation at polar sites. Interacts either with FtsZ or with one of its binding partners to promote depolymerization. The chain is Septation ring formation regulator EzrA from Oceanobacillus iheyensis (strain DSM 14371 / CIP 107618 / JCM 11309 / KCTC 3954 / HTE831).